The chain runs to 189 residues: dCTP deaminase (189 aa).

DCTP is bound by residues 112 to 117, 136 to 138, glutamine 157, tyrosine 171, and glutamine 181; these read KSTYAR and TLE. The active-site Proton donor/acceptor is the glutamate 138.

It belongs to the dCTP deaminase family. Homotrimer.

It catalyses the reaction dCTP + H2O + H(+) = dUTP + NH4(+). It functions in the pathway pyrimidine metabolism; dUMP biosynthesis; dUMP from dCTP (dUTP route): step 1/2. Its function is as follows. Catalyzes the deamination of dCTP to dUTP. The chain is dCTP deaminase from Acinetobacter baumannii (strain SDF).